The chain runs to 202 residues: Nascent polypeptide-associated complex subunit alpha (202 aa).

Basic and acidic residues predominate over residues 1–19 (MADPRVEEIVEEETPKQTV). Residues 1-41 (MADPRVEEIVEEETPKQTVEDAGSDSESEAGEANIPAGAAV) form a disordered region. The 66-residue stretch at 45-110 (SRNEKKARKA…AKIEDLNSQA (66 aa)) folds into the NAC-A/B domain. The span at 117 to 127 (QLAAAEAAAGE) shows a compositional bias: low complexity. Residues 117 to 165 (QLAAAEAAAGEHAGHDHEHDLGTKVPEAETKKEEEEDDGEPVDESGLEA) are disordered. Positions 128–149 (HAGHDHEHDLGTKVPEAETKKE) are enriched in basic and acidic residues. Acidic residues predominate over residues 150–162 (EEEDDGEPVDESG). The 40-residue stretch at 163-202 (LEAKDIELVMAQANVSRKKAVKALRENDNDIVNSIMALSI) folds into the UBA domain.

The protein belongs to the NAC-alpha family. Part of the nascent polypeptide-associated complex (NAC), consisting of egd2 and egd1. NAC associates with ribosomes via egd1.

Its subcellular location is the cytoplasm. The protein localises to the nucleus. Its function is as follows. Component of the nascent polypeptide-associated complex (NAC), a dynamic component of the ribosomal exit tunnel, protecting the emerging polypeptides from interaction with other cytoplasmic proteins to ensure appropriate nascent protein targeting. The NAC complex also promotes mitochondrial protein import by enhancing productive ribosome interactions with the outer mitochondrial membrane and blocks the inappropriate interaction of ribosomes translating non-secretory nascent polypeptides with translocation sites in the membrane of the endoplasmic reticulum. Egd2 may also be involved in transcription regulation. In Aspergillus oryzae (strain ATCC 42149 / RIB 40) (Yellow koji mold), this protein is Nascent polypeptide-associated complex subunit alpha (egd2).